The following is a 374-amino-acid chain: Amino acid binding protein (374 aa).

The first 27 residues, 1–27 (MSKKLFRKGILALAVSSVMGLSTHALA), serve as a signal peptide directing secretion.

The protein belongs to the leucine-binding protein family.

It localises to the periplasm. Its function is as follows. Binds primarily proteinogenic amino acids. In Pseudomonas aeruginosa (strain ATCC 15692 / DSM 22644 / CIP 104116 / JCM 14847 / LMG 12228 / 1C / PRS 101 / PAO1), this protein is Amino acid binding protein.